Reading from the N-terminus, the 389-residue chain is Migration and invasion-inhibitory protein (389 aa).

The segment covering 44 to 54 (LDYSSSSNNLE) has biased composition (low complexity). 2 disordered regions span residues 44-80 (LDYS…WDPL) and 131-150 (KRPV…AQVP). Residues 58-70 (SQETSASSVAPNS) show a composition bias toward polar residues. A compositionally biased stretch (basic and acidic residues) spans 71–80 (QDKRHVWDPL). A Phosphoserine modification is found at Ser309.

As to quaternary structure, interacts with IGFBP2.

Functionally, inhibits glioma cells invasion and down-regulates adhesion- and motility-associated genes such as NFKB2 and ICAM1. Exhibits opposing effects to IGFBP2 on cell invasion. The polypeptide is Migration and invasion-inhibitory protein (Miip) (Rattus norvegicus (Rat)).